The primary structure comprises 210 residues: Thymidylate kinase (210 aa).

10-17 serves as a coordination point for ATP; sequence GPEGAGKS.

The protein belongs to the thymidylate kinase family.

The catalysed reaction is dTMP + ATP = dTDP + ADP. In terms of biological role, phosphorylation of dTMP to form dTDP in both de novo and salvage pathways of dTTP synthesis. The chain is Thymidylate kinase from Pseudomonas syringae pv. tomato (strain ATCC BAA-871 / DC3000).